We begin with the raw amino-acid sequence, 133 residues long: Minor spike protein H (133 aa).

Belongs to the microviridae H protein family.

The protein resides in the virion. In terms of biological role, probably triggers with protein G the injection of the phage DNA into the host upon conformational changes induced by virus-host receptor interaction. In Spiroplasma virus 4 (SpV4), this protein is Minor spike protein H.